The sequence spans 303 residues: UDP-N-acetylenolpyruvoylglucosamine reductase (303 aa).

Residues 23–188 (KVGGPADYLV…ISAKFALKPG (166 aa)) enclose the FAD-binding PCMH-type domain. Residue Arg-167 is part of the active site. Ser-217 (proton donor) is an active-site residue. The active site involves Glu-287.

Belongs to the MurB family. It depends on FAD as a cofactor.

It is found in the cytoplasm. It catalyses the reaction UDP-N-acetyl-alpha-D-muramate + NADP(+) = UDP-N-acetyl-3-O-(1-carboxyvinyl)-alpha-D-glucosamine + NADPH + H(+). It participates in cell wall biogenesis; peptidoglycan biosynthesis. Functionally, cell wall formation. This is UDP-N-acetylenolpyruvoylglucosamine reductase from Streptococcus uberis (strain ATCC BAA-854 / 0140J).